Reading from the N-terminus, the 117-residue chain is Non-specific lipid-transfer protein (117 aa).

Positions 1 to 26 (MASSAFVKFTCALVMCMMVAAPLAEA) are cleaved as a signal peptide. Cystine bridges form between C29–C76, C39–C53, C54–C99, and C74–C113.

This sequence belongs to the plant LTP family.

Plant non-specific lipid-transfer proteins transfer phospholipids as well as galactolipids across membranes. May play a role in wax or cutin deposition in the cell walls of expanding epidermal cells and certain secretory tissues. Also has fungicide activity. The polypeptide is Non-specific lipid-transfer protein (IWF1') (Beta vulgaris (Sugar beet)).